The following is a 155-amino-acid chain: NADPH-dependent 7-cyano-7-deazaguanine reductase (155 aa).

The active-site Thioimide intermediate is Cys-53. The Proton donor role is filled by Asp-60. Substrate is bound by residues 75-77 (VES) and 94-95 (HE).

The protein belongs to the GTP cyclohydrolase I family. QueF type 1 subfamily.

The protein resides in the cytoplasm. It carries out the reaction 7-aminomethyl-7-carbaguanine + 2 NADP(+) = 7-cyano-7-deazaguanine + 2 NADPH + 3 H(+). It participates in tRNA modification; tRNA-queuosine biosynthesis. Its function is as follows. Catalyzes the NADPH-dependent reduction of 7-cyano-7-deazaguanine (preQ0) to 7-aminomethyl-7-deazaguanine (preQ1). In Ruegeria pomeroyi (strain ATCC 700808 / DSM 15171 / DSS-3) (Silicibacter pomeroyi), this protein is NADPH-dependent 7-cyano-7-deazaguanine reductase.